The primary structure comprises 424 residues: Enolase (424 aa).

Glutamine 165 provides a ligand contact to (2R)-2-phosphoglycerate. Residue glutamate 207 is the Proton donor of the active site. Mg(2+) is bound by residues aspartate 244, glutamate 283, and aspartate 310. Lysine 335, arginine 364, serine 365, and lysine 386 together coordinate (2R)-2-phosphoglycerate. The Proton acceptor role is filled by lysine 335.

This sequence belongs to the enolase family. Requires Mg(2+) as cofactor.

The protein localises to the cytoplasm. Its subcellular location is the secreted. It localises to the cell surface. It carries out the reaction (2R)-2-phosphoglycerate = phosphoenolpyruvate + H2O. The protein operates within carbohydrate degradation; glycolysis; pyruvate from D-glyceraldehyde 3-phosphate: step 4/5. In terms of biological role, catalyzes the reversible conversion of 2-phosphoglycerate (2-PG) into phosphoenolpyruvate (PEP). It is essential for the degradation of carbohydrates via glycolysis. This is Enolase from Chlamydia caviae (strain ATCC VR-813 / DSM 19441 / 03DC25 / GPIC) (Chlamydophila caviae).